A 465-amino-acid chain; its full sequence is Uronate isomerase (465 aa).

This sequence belongs to the metallo-dependent hydrolases superfamily. Uronate isomerase family.

The catalysed reaction is D-glucuronate = D-fructuronate. It carries out the reaction aldehydo-D-galacturonate = keto-D-tagaturonate. Its pathway is carbohydrate metabolism; pentose and glucuronate interconversion. The polypeptide is Uronate isomerase (Streptococcus equi subsp. zooepidemicus (strain H70)).